Here is a 322-residue protein sequence, read N- to C-terminus: Thiamine thiazole synthase (322 aa).

Substrate-binding positions include C84, 105–106 (EA), G113, and V178. C211 is subject to 2,3-didehydroalanine (Cys). Residues D213, H228, M280, and 290 to 292 (RMG) each bind substrate.

It belongs to the THI4 family. In terms of assembly, homooctamer. It depends on Fe cation as a cofactor. In terms of processing, during the catalytic reaction, a sulfide is transferred from Cys-211 to a reaction intermediate, generating a dehydroalanine residue.

It localises to the cytoplasm. It is found in the nucleus. The catalysed reaction is [ADP-thiazole synthase]-L-cysteine + glycine + NAD(+) = [ADP-thiazole synthase]-dehydroalanine + ADP-5-ethyl-4-methylthiazole-2-carboxylate + nicotinamide + 3 H2O + 2 H(+). Involved in biosynthesis of the thiamine precursor thiazole. Catalyzes the conversion of NAD and glycine to adenosine diphosphate 5-(2-hydroxyethyl)-4-methylthiazole-2-carboxylic acid (ADT), an adenylated thiazole intermediate. The reaction includes an iron-dependent sulfide transfer from a conserved cysteine residue of the protein to a thiazole intermediate. The enzyme can only undergo a single turnover, which suggests it is a suicide enzyme. May have additional roles in adaptation to various stress conditions and in DNA damage tolerance. The protein is Thiamine thiazole synthase of Fusarium vanettenii (strain ATCC MYA-4622 / CBS 123669 / FGSC 9596 / NRRL 45880 / 77-13-4) (Fusarium solani subsp. pisi).